The primary structure comprises 457 residues: Siroheme synthase (457 aa).

The segment at 1-204 (MDHLPIFCQL…QDQQAVEETT (204 aa)) is precorrin-2 dehydrogenase /sirohydrochlorin ferrochelatase. Residues 22-23 (DV) and 43-44 (LA) each bind NAD(+). S128 carries the phosphoserine modification. The segment at 216-457 (GEVVLVGAGP…REKLNWFSNH (242 aa)) is uroporphyrinogen-III C-methyltransferase. P225 contributes to the S-adenosyl-L-methionine binding site. D248 serves as the catalytic Proton acceptor. K270 (proton donor) is an active-site residue. Residues 301-303 (GGD), I306, 331-332 (TA), M382, and G411 contribute to the S-adenosyl-L-methionine site.

It in the N-terminal section; belongs to the precorrin-2 dehydrogenase / sirohydrochlorin ferrochelatase family. This sequence in the C-terminal section; belongs to the precorrin methyltransferase family.

The catalysed reaction is uroporphyrinogen III + 2 S-adenosyl-L-methionine = precorrin-2 + 2 S-adenosyl-L-homocysteine + H(+). It catalyses the reaction precorrin-2 + NAD(+) = sirohydrochlorin + NADH + 2 H(+). The enzyme catalyses siroheme + 2 H(+) = sirohydrochlorin + Fe(2+). It functions in the pathway cofactor biosynthesis; adenosylcobalamin biosynthesis; precorrin-2 from uroporphyrinogen III: step 1/1. It participates in cofactor biosynthesis; adenosylcobalamin biosynthesis; sirohydrochlorin from precorrin-2: step 1/1. The protein operates within porphyrin-containing compound metabolism; siroheme biosynthesis; precorrin-2 from uroporphyrinogen III: step 1/1. Its pathway is porphyrin-containing compound metabolism; siroheme biosynthesis; siroheme from sirohydrochlorin: step 1/1. It functions in the pathway porphyrin-containing compound metabolism; siroheme biosynthesis; sirohydrochlorin from precorrin-2: step 1/1. Multifunctional enzyme that catalyzes the SAM-dependent methylations of uroporphyrinogen III at position C-2 and C-7 to form precorrin-2 via precorrin-1. Then it catalyzes the NAD-dependent ring dehydrogenation of precorrin-2 to yield sirohydrochlorin. Finally, it catalyzes the ferrochelation of sirohydrochlorin to yield siroheme. The protein is Siroheme synthase of Enterobacter sp. (strain 638).